The chain runs to 150 residues: MFLPKFNPIRSFSPILRAKTLLRYQNRMYLSTEIRKAIEDAIESAPVVLFMKGTPEFPKCGFSRATIGLLGNQGVDPAKFAAYNVLEDPELREGIKEFSEWPTIPQLYVNKEFIGGCDVITSMARSGELADLLEEAQALVPEEEEETKDR.

The transit peptide at M1–Y29 directs the protein to the mitochondrion. The Glutaredoxin domain occupies R35–V140. K52 contributes to the glutathione binding site. A [2Fe-2S] cluster-binding site is contributed by C60. Residues R92–K96, I104, and C117–D118 contribute to the glutathione site.

The protein belongs to the glutaredoxin family. Monothiol subfamily. Homodimer. Interacts with SSQ1. Interacts with BOL1.

Its subcellular location is the mitochondrion matrix. Functionally, monothiol glutaredoxin involved in mitochondrial iron-sulfur (Fe/S) cluster transfer. Receives 2Fe/2S clusters from scaffold protein ISU1 and mediates their transfer to apoproteins, to the 4Fe/FS cluster biosynthesis machinery, or export from mitochondrion. This Saccharomyces cerevisiae (strain ATCC 204508 / S288c) (Baker's yeast) protein is Monothiol glutaredoxin-5, mitochondrial.